Here is a 184-residue protein sequence, read N- to C-terminus: ATP synthase subunit b, chloroplastic (184 aa).

The helical transmembrane segment at Thr29–Leu49 threads the bilayer.

Belongs to the ATPase B chain family. As to quaternary structure, F-type ATPases have 2 components, F(1) - the catalytic core - and F(0) - the membrane proton channel. F(1) has five subunits: alpha(3), beta(3), gamma(1), delta(1), epsilon(1). F(0) has four main subunits: a(1), b(1), b'(1) and c(10-14). The alpha and beta chains form an alternating ring which encloses part of the gamma chain. F(1) is attached to F(0) by a central stalk formed by the gamma and epsilon chains, while a peripheral stalk is formed by the delta, b and b' chains.

Its subcellular location is the plastid. The protein resides in the chloroplast thylakoid membrane. In terms of biological role, f(1)F(0) ATP synthase produces ATP from ADP in the presence of a proton or sodium gradient. F-type ATPases consist of two structural domains, F(1) containing the extramembraneous catalytic core and F(0) containing the membrane proton channel, linked together by a central stalk and a peripheral stalk. During catalysis, ATP synthesis in the catalytic domain of F(1) is coupled via a rotary mechanism of the central stalk subunits to proton translocation. Its function is as follows. Component of the F(0) channel, it forms part of the peripheral stalk, linking F(1) to F(0). The chain is ATP synthase subunit b, chloroplastic from Anthoceros angustus (Hornwort).